We begin with the raw amino-acid sequence, 958 residues long: Probable transport protein MmpL1 (958 aa).

Helical transmembrane passes span 19–39 (ALSL…NVVA), 192–212 (SLHT…FIAY), 216–236 (SAAL…RGII), 252–272 (VNVL…FLVG), 295–315 (TAHV…CLGF), 329–349 (AIGL…IIAV), 377–397 (WPGP…LALP), 762–782 (YDVM…MLGI), 791–811 (VIVG…VLIW), 814–834 (ILHM…MLAV), 868–888 (VVTI…ASDL), and 906–927 (TLVV…WFWW).

It belongs to the resistance-nodulation-cell division (RND) (TC 2.A.6) family. MmpL subfamily.

It localises to the cell membrane. The chain is Probable transport protein MmpL1 (mmpL1) from Mycobacterium tuberculosis (strain CDC 1551 / Oshkosh).